The primary structure comprises 69 residues: Large ribosomal subunit protein eL38 (69 aa).

It belongs to the eukaryotic ribosomal protein eL38 family.

This chain is Large ribosomal subunit protein eL38 (RPL38), found in Solanum lycopersicum (Tomato).